The following is a 188-amino-acid chain: Protein SSX3 (188 aa).

A KRAB-related domain is found at 20–83 (KIQKAFDDIA…KRVTDFQGND (64 aa)). Positions 113–162 (PKKPAEEGNVSKEVPEASGPQNDGKQLCPPGKPTTSEKINMISGPKRGEH) are disordered. The span at 115–127 (KPAEEGNVSKEVP) shows a compositional bias: basic and acidic residues. Phosphoserine is present on serine 123.

This sequence belongs to the SSX family. Interacts with SSX2IP.

Its function is as follows. Could act as a modulator of transcription. This chain is Protein SSX3 (SSX3), found in Homo sapiens (Human).